Here is a 97-residue protein sequence, read N- to C-terminus: Co-chaperonin GroES (97 aa).

It belongs to the GroES chaperonin family. As to quaternary structure, heptamer of 7 subunits arranged in a ring. Interacts with the chaperonin GroEL.

The protein localises to the cytoplasm. Together with the chaperonin GroEL, plays an essential role in assisting protein folding. The GroEL-GroES system forms a nano-cage that allows encapsulation of the non-native substrate proteins and provides a physical environment optimized to promote and accelerate protein folding. GroES binds to the apical surface of the GroEL ring, thereby capping the opening of the GroEL channel. The sequence is that of Co-chaperonin GroES from Azotobacter vinelandii (strain DJ / ATCC BAA-1303).